Here is a 399-residue protein sequence, read N- to C-terminus: Bombesin receptor subtype-3 (399 aa).

Over 1-41 the chain is Extracellular; sequence MSQKQPQSPNQTLISITNDTESSSSVVSNDTTNKGWTGDNS. Residues Asn-10 and Asn-18 are each glycosylated (N-linked (GlcNAc...) asparagine). A helical transmembrane segment spans residues 42-63; the sequence is PGIEALCAIYITYAVIISVGIL. Residues 64–82 lie on the Cytoplasmic side of the membrane; sequence GNAILIKVFFKTKSMQTVP. A helical membrane pass occupies residues 83 to 103; that stretch reads NIFITSLALGDLLLLLTCVPV. The Extracellular portion of the chain corresponds to 104-121; the sequence is DATHYLAEGWLFGRIGCK. The cysteines at positions 120 and 203 are disulfide-linked. Residues 122–143 form a helical membrane-spanning segment; it reads VLSFIRLTSVGVSVFTLTILSA. Residues 144–163 are Cytoplasmic-facing; the sequence is DRYKAVVKPLERQPSNAILK. Residues 164-184 traverse the membrane as a helical segment; the sequence is TCAKAGCIWIMSMIFALPEAI. Residues 185–220 lie on the Extracellular side of the membrane; it reads FSNVHTLRDPNKNMTSEWCAFYPVSEKLLQEIHALL. The chain crosses the membrane as a helical span at residues 221–241; sequence SFLVFYIIPLSIISVYYSLIA. The Cytoplasmic segment spans residues 242–272; it reads RTLYKSTLNIPTEEQSHARKQVESRKRIAKT. The chain crosses the membrane as a helical span at residues 273–293; sequence VLVLVALFALCWLPNHLLNLY. Topologically, residues 294–313 are extracellular; it reads HSFTHKAYEDSSAIHFIVTI. Residues 314–333 form a helical membrane-spanning segment; sequence FSRVLAFSNSCVNPFALYWL. Topologically, residues 334–399 are cytoplasmic; that stretch reads SKTFQKQFKA…RPMKKEENRV (66 aa). A lipid anchor (S-palmitoyl cysteine) is attached at Cys-347.

The protein belongs to the G-protein coupled receptor 1 family. As to quaternary structure, interacts with C6orf89. As to expression, mainly in uteri of pregnant animals.

The protein resides in the cell membrane. Its function is as follows. Role in sperm cell division, maturation, or function. The relative order of ligand affinity is GRP = neuromedin-C &gt;&gt; neuromedin-B. This receptor mediates its action by association with G proteins that activate a phosphatidylinositol-calcium second messenger system. In Cavia porcellus (Guinea pig), this protein is Bombesin receptor subtype-3 (BRS3).